Consider the following 179-residue polypeptide: Cytochrome b6-f complex iron-sulfur subunit 1 (179 aa).

Residues 21-43 (LLTFGTVTGVALGALYPVVNYFI) traverse the membrane as a helical segment. The 102-residue stretch at 61–162 (GNDVSVSKFL…AKTENDKIVL (102 aa)) folds into the Rieske domain. 4 residues coordinate [2Fe-2S] cluster: Cys-108, His-110, Cys-126, and His-129. Cys-113 and Cys-128 are disulfide-bonded.

Belongs to the Rieske iron-sulfur protein family. The 4 large subunits of the cytochrome b6-f complex are cytochrome b6, subunit IV (17 kDa polypeptide, PetD), cytochrome f and the Rieske protein, while the 4 small subunits are PetG, PetL, PetM and PetN. The complex functions as a dimer. The cofactor is [2Fe-2S] cluster.

It is found in the cellular thylakoid membrane. It carries out the reaction 2 oxidized [plastocyanin] + a plastoquinol + 2 H(+)(in) = 2 reduced [plastocyanin] + a plastoquinone + 4 H(+)(out). In terms of biological role, component of the cytochrome b6-f complex, which mediates electron transfer between photosystem II (PSII) and photosystem I (PSI), cyclic electron flow around PSI, and state transitions. The protein is Cytochrome b6-f complex iron-sulfur subunit 1 of Trichormus variabilis (strain ATCC 29413 / PCC 7937) (Anabaena variabilis).